Consider the following 364-residue polypeptide: Mannose-1-phosphate guanyltransferase (364 aa).

This sequence belongs to the transferase hexapeptide repeat family.

It is found in the cytoplasm. The enzyme catalyses alpha-D-mannose 1-phosphate + GTP + H(+) = GDP-alpha-D-mannose + diphosphate. The protein operates within nucleotide-sugar biosynthesis; GDP-alpha-D-mannose biosynthesis; GDP-alpha-D-mannose from alpha-D-mannose 1-phosphate (GTP route): step 1/1. Functionally, involved in cell wall synthesis where it is required for glycosylation. Involved in cell cycle progression through cell-size checkpoint. The chain is Mannose-1-phosphate guanyltransferase (mpg1) from Emericella nidulans (strain FGSC A4 / ATCC 38163 / CBS 112.46 / NRRL 194 / M139) (Aspergillus nidulans).